A 125-amino-acid polypeptide reads, in one-letter code: Large ribosomal subunit protein bL19 (125 aa).

It belongs to the bacterial ribosomal protein bL19 family.

Its function is as follows. This protein is located at the 30S-50S ribosomal subunit interface and may play a role in the structure and function of the aminoacyl-tRNA binding site. This chain is Large ribosomal subunit protein bL19, found in Wolbachia pipientis subsp. Culex pipiens (strain wPip).